Here is a 164-residue protein sequence, read N- to C-terminus: Large ribosomal subunit protein eL24z (164 aa).

Basic and acidic residues predominate over residues 117–133; it reads ERIKKTKDEKKAKKVEY. The disordered stretch occupies residues 117 to 164; it reads ERIKKTKDEKKAKKVEYASKQQKSQVKGNIPKSAAPKAAKMGGGGGRR.

It belongs to the eukaryotic ribosomal protein eL24 family. In terms of assembly, interacts with the cauliflower mosaic virus transactivator TAV to form a TAV/60S complex. Interacts with REIL1 AND REIL2.

Might have an extraribosomal function in reinitiation of translation. The chain is Large ribosomal subunit protein eL24z (RPL24A) from Arabidopsis thaliana (Mouse-ear cress).